A 491-amino-acid polypeptide reads, in one-letter code: Mitochondrial distribution and morphology protein 12 (491 aa).

Residues 1–491 (MSIDLNWEAA…VFPSYWTFLV (491 aa)) enclose the SMP-LTD domain. The span at 72–82 (ESDSSEDEDGE) shows a compositional bias: acidic residues. Disordered regions lie at residues 72–123 (ESDS…NHHD), 201–313 (GWPD…MRER), and 389–434 (GDED…QPRR). Basic and acidic residues-rich tracts occupy residues 83–123 (GHDA…NHHD) and 213–229 (MTDH…HNKN). The segment covering 230–249 (ETGSPSRPSTAHTNPTQLSH) has biased composition (polar residues). A compositionally biased stretch (low complexity) spans 252–262 (SAASSSNNTSN). Residues 270–279 (DHTSSTTATT) are compositionally biased toward polar residues. Residues 400–421 (STANTTTAASGSSTDNNNNNNE) are compositionally biased toward low complexity.

It belongs to the MDM12 family. Component of the ER-mitochondria encounter structure (ERMES) or MDM complex, composed of mmm1, mdm10, mdm12 and mdm34. A mmm1 homodimer associates with one molecule of mdm12 on each side in a pairwise head-to-tail manner, and the SMP-LTD domains of mmm1 and mdm12 generate a continuous hydrophobic tunnel for phospholipid trafficking.

It localises to the mitochondrion outer membrane. The protein resides in the endoplasmic reticulum membrane. Component of the ERMES/MDM complex, which serves as a molecular tether to connect the endoplasmic reticulum (ER) and mitochondria. Components of this complex are involved in the control of mitochondrial shape and protein biogenesis, and function in nonvesicular lipid trafficking between the ER and mitochondria. Mdm12 is required for the interaction of the ER-resident membrane protein mmm1 and the outer mitochondrial membrane-resident beta-barrel protein mdm10. The mdm12-mmm1 subcomplex functions in the major beta-barrel assembly pathway that is responsible for biogenesis of all mitochondrial outer membrane beta-barrel proteins, and acts in a late step after the SAM complex. The mdm10-mdm12-mmm1 subcomplex further acts in the TOM40-specific pathway after the action of the mdm12-mmm1 complex. Essential for establishing and maintaining the structure of mitochondria and maintenance of mtDNA nucleoids. This chain is Mitochondrial distribution and morphology protein 12, found in Talaromyces stipitatus (strain ATCC 10500 / CBS 375.48 / QM 6759 / NRRL 1006) (Penicillium stipitatum).